The sequence spans 263 residues: Hydroxyethylthiazole kinase 1 (263 aa).

Met42 contributes to the substrate binding site. Residues Lys118 and Thr164 each contribute to the ATP site. Gly191 serves as a coordination point for substrate.

It belongs to the Thz kinase family. The cofactor is Mg(2+).

It carries out the reaction 5-(2-hydroxyethyl)-4-methylthiazole + ATP = 4-methyl-5-(2-phosphooxyethyl)-thiazole + ADP + H(+). It participates in cofactor biosynthesis; thiamine diphosphate biosynthesis; 4-methyl-5-(2-phosphoethyl)-thiazole from 5-(2-hydroxyethyl)-4-methylthiazole: step 1/1. In terms of biological role, catalyzes the phosphorylation of the hydroxyl group of 4-methyl-5-beta-hydroxyethylthiazole (THZ). The protein is Hydroxyethylthiazole kinase 1 of Clostridium botulinum (strain Kyoto / Type A2).